A 974-amino-acid polypeptide reads, in one-letter code: MILKTAFSLPTPTTTLLSPSSPHQLNTLFFTRRRRRLISPSRLNSIFSQRRFSFSAAASGNNVFTSPETSKTFDFSSEEKIYKWWESQGYFKPNFDQGGSPFVIPMPPPNVTGSLHMGHAMFVTLEDIMVRYNRMNGRPTLWLPGTDHAGIATQLVVEKMLASEGIKRVDLGRDEFTKRVWEWKEKYGGTITNQIKRLGASCDWSRERFTLDEQLSRAVVEAFVKLHDKGLIYQGSYMVNWSPNLQTAVSDLEVEYSEEPGFLYHIKYRVAGSPDFLTIATTRPETLFGDVALAVHPEDDRYSKYVGQTAIVPMTYGRHVPIIADKYVDKDFGTGVLKISPGHDHNDYLLARKLGLPILNVMNKDATLNDVAGLFCGLDRFEVREKLWADLEEIGLAVKKEPHTLRVPRSQRGGEVIEPLVSKQWFVHMDPLAEKALLAVENKELTIIPERFEKIYNHWLTNIKDWCISRQLWWGHRIPVWYVVGKDCEEDYIVAKSAEEALEKALEKYGKDVEIYQDPDVLDTWFSSSLWPFSTLGWPDVAAKDFNNFYPTNMLETGHDILFFWVARMVMMGIEFTGTVPFSHVYLHGLIRDSQGRKMSKSLGNVIDPLDTIKDFGTDALRFTIALGTAGQDLNLSTERLTANKAFTNKLWNAGKFVLHSLPSLSDTSAWENLLDLKLDKEETLLSLPLPECWAVSKLHILIDSVTASYEKLFFGDVGRETYDFFWSDFADWYIEASKSRLYGSGGNSVSLASQAVLLYVFENILKLLHPFMPFVTEDLWQALPYRKEALIVSPWPQNSLPRNVESIKRFENLQALTRAIRNARAEYSVEPVKRISASVVGSAEVIEYISKEKEVLALLSRLDLNNVHFSNAPPGDANLSVHLVASEGLEAYLPLAAMVDISSEVQRISKRLSKMQTEYDALITRLSSPKFVEKAPEEVVRGVKEQVEELEEKIKLTKARLDFLKSTTSLVSQ.

Positions 109–119 (PNVTGSLHMGH) match the 'HIGH' region motif. The LRR 1 repeat unit spans residues 432-454 (LAEKALLAVENKELTIIPERFEK). A coiled-coil region spans residues 489–518 (EEDYIVAKSAEEALEKALEKYGKDVEIYQD). The 'KMSKS' region signature appears at 598–602 (KMSKS). Residue K601 participates in ATP binding. One copy of the LRR 2 repeat lies at 857–880 (LALLSRLDLNNVHFSNAPPGDANL).

This sequence belongs to the class-I aminoacyl-tRNA synthetase family.

It localises to the plastid. It is found in the chloroplast. The protein localises to the mitochondrion. It catalyses the reaction tRNA(Val) + L-valine + ATP = L-valyl-tRNA(Val) + AMP + diphosphate. The sequence is that of Valine--tRNA ligase, chloroplastic/mitochondrial 2 from Arabidopsis thaliana (Mouse-ear cress).